The primary structure comprises 365 residues: DNA replication and repair protein RecF (365 aa).

G30–T37 is an ATP binding site.

Belongs to the RecF family.

The protein localises to the cytoplasm. Its function is as follows. The RecF protein is involved in DNA metabolism; it is required for DNA replication and normal SOS inducibility. RecF binds preferentially to single-stranded, linear DNA. It also seems to bind ATP. The polypeptide is DNA replication and repair protein RecF (Geobacter sulfurreducens (strain ATCC 51573 / DSM 12127 / PCA)).